A 382-amino-acid polypeptide reads, in one-letter code: Mitogen-activated protein kinase 9 (382 aa).

Residues 26–321 enclose the Protein kinase domain; sequence YQQLKPIGSG…VDEALRHPYI (296 aa). ATP-binding positions include 33–38 and Lys55; that span reads GSGAQG. Asp151 serves as the catalytic Proton acceptor. Thr183 is modified (phosphothreonine). The TXY signature appears at 183–185; that stretch reads TPY. Tyr185 bears the Phosphotyrosine mark.

The protein belongs to the protein kinase superfamily. CMGC Ser/Thr protein kinase family. MAP kinase subfamily. Mg(2+) is required as a cofactor. Post-translationally, dually phosphorylated on Thr-183 and Tyr-185, which activates the enzyme. In terms of tissue distribution, expressed in the neuroepithelium of developing brain at stages 16 to 26.

It carries out the reaction L-seryl-[protein] + ATP = O-phospho-L-seryl-[protein] + ADP + H(+). The enzyme catalyses L-threonyl-[protein] + ATP = O-phospho-L-threonyl-[protein] + ADP + H(+). Activated by threonine and tyrosine phosphorylation. Functionally, responds to activation by environmental stress and pro-inflammatory cytokines by phosphorylating a number of transcription factors, primarily components of AP-1 such as JUN and ATF2 and thus regulates AP-1 transcriptional activity. May play a role in the development of the central nervous system during embryogenesis. May play a role in the regulation of the circadian clock. This is Mitogen-activated protein kinase 9 (MAPK9) from Gallus gallus (Chicken).